Here is a 102-residue protein sequence, read N- to C-terminus: Transcription factor UPBEAT1 (102 aa).

The bHLH domain occupies 32-82 (IRPRKSVEASRRPCRAIHRRVKTLKELVPNTKTSEGLDGLFRQTADYILAL).

In terms of assembly, homodimer. In terms of tissue distribution, expressed in the root vascular tissue and in root hairs and lateral root caps. Detected at the protein level in all cell files in the elongation zone.

The protein localises to the nucleus. Transcription factor that modulates the balance between cellular proliferation and differentiation in root growth. Does not act through cytokinin and auxin signaling, but by repressing peroxidase expression in the elongation zone. The chain is Transcription factor UPBEAT1 (UPB1) from Arabidopsis thaliana (Mouse-ear cress).